The primary structure comprises 78 residues: Dermaseptin-B1 (78 aa).

A signal peptide spans 1-22; that stretch reads MDILKKSLFLVLFLGLVSLSIC. The propeptide occupies 23–42; that stretch reads EEEKRENEDEEKQDDEQSEM. Position 75 is a glutamine amide (Gln75). The propeptide occupies 76–78; sequence GEQ.

Belongs to the frog skin active peptide (FSAP) family. Dermaseptin subfamily. Expressed by the skin glands.

It localises to the secreted. Functionally, possesses a potent antimicrobial activity against bacteria, fungi and protozoa. Probably acts by disturbing membrane functions with its amphipathic structure. This chain is Dermaseptin-B1, found in Phyllomedusa bicolor (Two-colored leaf frog).